A 205-amino-acid chain; its full sequence is High frequency lysogenization protein HflD homolog (205 aa).

This sequence belongs to the HflD family.

It localises to the cytoplasm. Its subcellular location is the cell inner membrane. This chain is High frequency lysogenization protein HflD homolog, found in Shewanella piezotolerans (strain WP3 / JCM 13877).